The primary structure comprises 219 residues: 2-hydroxy-3-keto-5-methylthiopentenyl-1-phosphate phosphatase (219 aa).

The protein belongs to the HAD-like hydrolase superfamily. MtnX family.

The enzyme catalyses 2-hydroxy-5-methylsulfanyl-3-oxopent-1-enyl phosphate + H2O = 1,2-dihydroxy-5-(methylsulfanyl)pent-1-en-3-one + phosphate. It participates in amino-acid biosynthesis; L-methionine biosynthesis via salvage pathway; L-methionine from S-methyl-5-thio-alpha-D-ribose 1-phosphate: step 4/6. In terms of biological role, dephosphorylates 2-hydroxy-3-keto-5-methylthiopentenyl-1-phosphate (HK-MTPenyl-1-P) yielding 1,2-dihydroxy-3-keto-5-methylthiopentene (DHK-MTPene). This chain is 2-hydroxy-3-keto-5-methylthiopentenyl-1-phosphate phosphatase, found in Bacillus cytotoxicus (strain DSM 22905 / CIP 110041 / 391-98 / NVH 391-98).